Here is a 304-residue protein sequence, read N- to C-terminus: Sulfate adenylyltransferase subunit 2 (304 aa).

The protein belongs to the PAPS reductase family. CysD subfamily. Heterodimer composed of CysD, the smaller subunit, and CysN.

It catalyses the reaction sulfate + ATP + H(+) = adenosine 5'-phosphosulfate + diphosphate. Its pathway is sulfur metabolism; hydrogen sulfide biosynthesis; sulfite from sulfate: step 1/3. In terms of biological role, with CysN forms the ATP sulfurylase (ATPS) that catalyzes the adenylation of sulfate producing adenosine 5'-phosphosulfate (APS) and diphosphate, the first enzymatic step in sulfur assimilation pathway. APS synthesis involves the formation of a high-energy phosphoric-sulfuric acid anhydride bond driven by GTP hydrolysis by CysN coupled to ATP hydrolysis by CysD. This Acinetobacter baumannii (strain SDF) protein is Sulfate adenylyltransferase subunit 2.